A 474-amino-acid polypeptide reads, in one-letter code: Cysteine--tRNA ligase (474 aa).

Cysteine 27 is a binding site for Zn(2+). The 'HIGH' region motif lies at 29-39; the sequence is PTVYNYIHIGN. The Zn(2+) site is built by cysteine 212, histidine 237, and glutamate 241. A 'KMSKS' region motif is present at residues 271–275; it reads KMSKS. Residue lysine 274 coordinates ATP.

This sequence belongs to the class-I aminoacyl-tRNA synthetase family. In terms of assembly, monomer. Zn(2+) serves as cofactor.

The protein localises to the cytoplasm. It carries out the reaction tRNA(Cys) + L-cysteine + ATP = L-cysteinyl-tRNA(Cys) + AMP + diphosphate. The sequence is that of Cysteine--tRNA ligase from Lactobacillus delbrueckii subsp. bulgaricus (strain ATCC 11842 / DSM 20081 / BCRC 10696 / JCM 1002 / NBRC 13953 / NCIMB 11778 / NCTC 12712 / WDCM 00102 / Lb 14).